Reading from the N-terminus, the 396-residue chain is Gap junction gamma-1 protein (396 aa).

Topologically, residues 1 to 22 (MSWSFLTRLLEEIHNHSTFVGK) are cytoplasmic. A helical membrane pass occupies residues 23 to 45 (IWLTVLIVFRIVLTAVGGESIYY). Residues 46–75 (DEQSKFVCNTEQPGCENVCYDAFAPLSHVR) lie on the Extracellular side of the membrane. Residues 76–95 (FWVFQIILVATPSVMYLGYA) form a helical membrane-spanning segment. The Cytoplasmic portion of the chain corresponds to 96–175 (IHKIAKMEHG…RRIREDGLMK (80 aa)). The interval 146-165 (LESEKENKDQNQSKPKHDGR) is disordered. The segment covering 147–156 (ESEKENKDQN) has biased composition (basic and acidic residues). The chain crosses the membrane as a helical span at residues 176-198 (IYVLQLLARTVFEVGFLVGQYFL). Over 199-228 (YGFQVHPFYVCSRLPCPHKIDCFISRPTEK) the chain is Extracellular. The chain crosses the membrane as a helical span at residues 229–248 (TIFLLIMYGVTGLCLLLNIW). Topologically, residues 249-396 (EMLHLGFGTI…SGDGKTSVWI (148 aa)) are cytoplasmic. The disordered stretch occupies residues 356–396 (YNHQNNPHGSREKKAKVGSKAGSNKSSASSKSGDGKTSVWI). The segment covering 373-396 (GSKAGSNKSSASSKSGDGKTSVWI) has biased composition (low complexity).

The protein belongs to the connexin family. Gamma-type subfamily. In terms of assembly, a connexon is composed of a hexamer of connexins. Interacts with CNST.

The protein resides in the cell membrane. It localises to the cell junction. It is found in the gap junction. In terms of biological role, one gap junction consists of a cluster of closely packed pairs of transmembrane channels, the connexons, through which materials of low MW diffuse from one cell to a neighboring cell. The sequence is that of Gap junction gamma-1 protein (GJC1) from Bos taurus (Bovine).